Consider the following 577-residue polypeptide: MRGFTYLSKVLHSHSSYSKLLVLCSVSTGGLLVYAESNVESGKQVVEQNQPESKKKRVVVLGTGWGGTSFLKDVDISSYDVQVVSPRNYFAFTPLLPSVTCGTVEARSIVEPVRNIIKKRSGEIQFWEAECLKIDPENRTVSCRSGINDNLAGQNDFSLQYDYLVVAVGAQVNTFNTPGVMEHCHFLKEVEDAQRIRRTVIDCFEKSVIPGLSEEERRTNLHFVIVGGGPTGVEFAAELHDYVYEDLVKIYPSVKDFVKITVIQSGDHILNTFDERISSFAEQKFQRDGIEVSTGCRVTSVSDHFINMKVKSTGKHVEVPYGMVVWSTGVGTRPFVKDFMEQVGQEKRRILATDEWLRVKGCSNVYALGDCASIDQRKVMEDISAIFKAADKDDSGTLSIEEFRDVLEDIIIRYPQVDLYLKNKHLLEAKDLFRDSEGNEREEVDIEGFKLALSHVDSQMKSLPATAQVAAQQGTYLSRCLNRWDQCKSNPEGPRHFKSSGRHEFLPFEYRHLGQFAPLGGDQAAAELPGDWVSMGHSTQWLWYSVYASKQVSWRTRYLVVGDWVRRYIFGRDSSRI.

The transit peptide at 1–35 (MRGFTYLSKVLHSHSSYSKLLVLCSVSTGGLLVYA) directs the protein to the mitochondrion. 57–87 (RVVVLGTGWGGTSFLKDVDISSYDVQVVSPR) contacts FAD. Position 221-257 (221-257 (LHFVIVGGGPTGVEFAAELHDYVYEDLVKIYPSVKDF)) interacts with NAD(+). The 36-residue stretch at 378-413 (KVMEDISAIFKAADKDDSGTLSIEEFRDVLEDIIIR) folds into the EF-hand domain. Residues D391, D393, S395, T397, and E402 each contribute to the Ca(2+) site. The short motif at 568–577 (YIFGRDSSRI) is the Microbody targeting signal element.

It belongs to the NADH dehydrogenase family. The cofactor is FAD.

The protein resides in the mitochondrion inner membrane. The protein localises to the peroxisome. The enzyme catalyses a quinone + NADH + H(+) = a quinol + NAD(+). It carries out the reaction a ubiquinone + NADH + H(+) = a ubiquinol + NAD(+). Activity is calcium-dependent with a more pronounced effect at higher pH. Functionally, alternative NADH-ubiquinone oxidoreductase which catalyzes the oxidation of mitochondrial NADH does not translocate protons across the inner mitochondrial membrane. Calcium-dependent NAD(P)H dehydrogenase. Binds calcium ions. This Solanum tuberosum (Potato) protein is External alternative NAD(P)H-ubiquinone oxidoreductase B1, mitochondrial (NDB1).